The chain runs to 448 residues: MAKHRYLPMTEQDEKEMLDVIGVKSIDDLFQDIPEKIRFKRDYDLKPAKSEPALLRELSQLASKNANTTEYASFLGAGVYSHYIPTVVDHVISRSEFYTAYTPYQPEISQGELQAIFEFQTMIAELTGMDLANSSMYDGGTALAEAAMLASGHTKRKKILISGAVHPESSNVLKTYATGQHIEVEVIPELDGKTDIEALKKALSDDIAGFVVQYPNFYGQVEPLAELEKLVHENNSLLLVSSNPLSLGLLTPPGEFGADIVVGDSQVFGIPESFGGPHCGFFAVTNKLMRKVPGRLVGETVDENGKRGYVLTLQAREQHIRRDKATSNICSNQALNALASSVAMATLGKTGLVEMAKQNLDKSHYAKQKFREKGFEVLFSDGFFNEFVVKLSKPIKEVNESLLDEGIIGGYDLGFYEEKYENHMLVAVTEMRTKEEIDAFVASLEGAK.

Belongs to the GcvP family. N-terminal subunit subfamily. As to quaternary structure, the glycine cleavage system is composed of four proteins: P, T, L and H. In this organism, the P 'protein' is a heterodimer of two subunits.

It carries out the reaction N(6)-[(R)-lipoyl]-L-lysyl-[glycine-cleavage complex H protein] + glycine + H(+) = N(6)-[(R)-S(8)-aminomethyldihydrolipoyl]-L-lysyl-[glycine-cleavage complex H protein] + CO2. In terms of biological role, the glycine cleavage system catalyzes the degradation of glycine. The P protein binds the alpha-amino group of glycine through its pyridoxal phosphate cofactor; CO(2) is released and the remaining methylamine moiety is then transferred to the lipoamide cofactor of the H protein. This chain is Probable glycine dehydrogenase (decarboxylating) subunit 1, found in Listeria monocytogenes serotype 4b (strain CLIP80459).